The sequence spans 182 residues: ADP-ribosylation factor 3 (182 aa).

The N-myristoyl glycine moiety is linked to residue glycine 2. Residues 24–31 (GLDNAGKT), 67–71 (DLGGQ), and 126–129 (NKQD) each bind GTP.

It belongs to the small GTPase superfamily. Arf family. As to quaternary structure, interacts with GRIP; but preferentially when bound to GTP.

The protein localises to the golgi apparatus. In terms of biological role, GTP-binding protein involved in protein trafficking; may modulate vesicle budding and uncoating within the Golgi apparatus. In Arabidopsis thaliana (Mouse-ear cress), this protein is ADP-ribosylation factor 3 (ARF3).